Here is a 444-residue protein sequence, read N- to C-terminus: Adenylyltransferase and sulfurtransferase UBA4 (444 aa).

Residues Gly-81, Asp-102, 109–113, Lys-126, and 170–171 contribute to the ATP site; these read SNLHR and DT. Zn(2+)-binding residues include Cys-212 and Cys-215. Residue Cys-229 is the Glycyl thioester intermediate; for adenylyltransferase activity of the active site. 2 residues coordinate Zn(2+): Cys-290 and Cys-293. Residues 343 to 442 form the Rhodanese domain; the sequence is KTKPYVLLDV…YIDEINPSLP (100 aa). Catalysis depends on Cys-401, which acts as the Cysteine persulfide intermediate; for sulfurtransferase activity.

In the N-terminal section; belongs to the HesA/MoeB/ThiF family. UBA4 subfamily. It depends on Zn(2+) as a cofactor.

The protein resides in the cytoplasm. The protein localises to the cytosol. It functions in the pathway tRNA modification; 5-methoxycarbonylmethyl-2-thiouridine-tRNA biosynthesis. In terms of biological role, plays a central role in 2-thiolation of mcm(5)S(2)U at tRNA wobble positions of cytosolic tRNA(Lys), tRNA(Glu) and tRNA(Gln). Acts by mediating the C-terminal thiocarboxylation of sulfur carrier URM1. Its N-terminus first activates URM1 as acyl-adenylate (-COAMP), then the persulfide sulfur on the catalytic cysteine is transferred to URM1 to form thiocarboxylation (-COSH) of its C-terminus. The reaction probably involves hydrogen sulfide that is generated from the persulfide intermediate and that acts as a nucleophile towards URM1. Subsequently, a transient disulfide bond is formed. Does not use thiosulfate as sulfur donor; NFS1 probably acting as a sulfur donor for thiocarboxylation reactions. Prior mcm(5) tRNA modification by the elongator complex is required for 2-thiolation. May also be involved in protein urmylation. The sequence is that of Adenylyltransferase and sulfurtransferase UBA4 from Kluyveromyces lactis (strain ATCC 8585 / CBS 2359 / DSM 70799 / NBRC 1267 / NRRL Y-1140 / WM37) (Yeast).